An 81-amino-acid chain; its full sequence is Small ribosomal subunit protein uS17 (81 aa).

It belongs to the universal ribosomal protein uS17 family. As to quaternary structure, part of the 30S ribosomal subunit.

In terms of biological role, one of the primary rRNA binding proteins, it binds specifically to the 5'-end of 16S ribosomal RNA. The polypeptide is Small ribosomal subunit protein uS17 (Trichormus variabilis (strain ATCC 29413 / PCC 7937) (Anabaena variabilis)).